The sequence spans 279 residues: Sperm acrosome membrane-associated protein 1 (279 aa).

A signal peptide spans 1–29; that stretch reads MKSRGAGCSARLLLTVGWLLLAGLQSTCG. Over 30–221 the chain is Extracellular; sequence INVTAIQDPS…VIICIFVIFV (192 aa). N31 carries an N-linked (GlcNAc...) asparagine glycan. The disordered stretch occupies residues 39–74; sequence SLAREGEGEPEGDEEPENDSETEKEPQAEAEDDSEG. Over residues 46–58 the composition is skewed to acidic residues; sequence GEPEGDEEPENDS. The chain crosses the membrane as a helical span at residues 222 to 242; that stretch reads LIFIIINWTAVKDFWAKASTT. Over 243–279 the chain is Cytoplasmic; sequence EIQSELSSMRYKDSTSLDQSPTDIPGHEDDALSEWNE. Y253 is modified (phosphotyrosine). A disordered region spans residues 253-279; the sequence is YKDSTSLDQSPTDIPGHEDDALSEWNE. Phosphoserine occurs at positions 262 and 275.

In terms of assembly, interacts with CYLC1; the interaction may be relevant for proper acrosome attachment to the nuclear envelope. Post-translationally, N-glycosylated.

The protein resides in the cytoplasmic vesicle. It is found in the secretory vesicle. It localises to the acrosome inner membrane. Its function is as follows. Plays a role in acrosome expansion and establishment of normal sperm morphology during spermatogenesis. Important for male fertility. In Bos taurus (Bovine), this protein is Sperm acrosome membrane-associated protein 1 (SPACA1).